A 225-amino-acid polypeptide reads, in one-letter code: UPF0758 protein Mhun_2739 (225 aa).

The 124-residue stretch at 102 to 225 (RITEPDHILK…VTSLRSLGYL (124 aa)) folds into the MPN domain. Zn(2+) is bound by residues histidine 174, histidine 176, and aspartate 187. The JAMM motif signature appears at 174 to 187 (HNHPSGNPEPSSED).

The protein belongs to the UPF0758 family.

This chain is UPF0758 protein Mhun_2739, found in Methanospirillum hungatei JF-1 (strain ATCC 27890 / DSM 864 / NBRC 100397 / JF-1).